The primary structure comprises 408 residues: Sex comb on midleg-like protein 4 (408 aa).

Residues S55 and S65 each carry the phosphoserine modification. The interval 274–338 is disordered; that stretch reads AGGPATTTSG…TRRPSSRNPS (65 aa). A compositionally biased stretch (polar residues) spans 278–287; the sequence is ATTTSGSRTN. Residues 288-306 are compositionally biased toward low complexity; sequence PVPSGGSSSPGLRLPASSP. The 67-residue stretch at 340–406 folds into the SAM domain; the sequence is WTVEDVVRFV…CYHIDKLKQA (67 aa).

This sequence belongs to the SCM family.

It is found in the nucleus. Its function is as follows. Putative Polycomb group (PcG) protein. PcG proteins act by forming multiprotein complexes, which are required to maintain the transcriptionally repressive state of homeotic genes throughout development. The protein is Sex comb on midleg-like protein 4 (Scml4) of Mus musculus (Mouse).